A 145-amino-acid chain; its full sequence is Superoxide dismutase [Mn/Fe] (145 aa).

The Fe(3+) site is built by His-10 and His-64. Mn(2+)-binding residues include His-10 and His-64.

Belongs to the iron/manganese superoxide dismutase family. Mn(2+) serves as cofactor. Fe(3+) is required as a cofactor.

The enzyme catalyses 2 superoxide + 2 H(+) = H2O2 + O2. Destroys superoxide anion radicals which are normally produced within the cells and which are toxic to biological systems. Catalyzes the dismutation of superoxide anion radicals into O2 and H2O2 by successive reduction and oxidation of the transition metal ion at the active site. The protein is Superoxide dismutase [Mn/Fe] (sodA) of Streptococcus porcinus.